The sequence spans 111 residues: Fluoride-specific ion channel FluC 3 (111 aa).

3 helical membrane-spanning segments follow: residues 26-46 (IPAGTLTVNLLGSIVLALLTF), 53-73 (VVYLVNIGMLGSFTTFSTFAY), and 91-111 (IFLNVMLCLLGVSIAYLALML). G63 and T66 together coordinate Na(+).

It belongs to the fluoride channel Fluc/FEX (TC 1.A.43) family.

It is found in the cell membrane. It catalyses the reaction fluoride(in) = fluoride(out). Na(+) is not transported, but it plays an essential structural role and its presence is essential for fluoride channel function. Functionally, fluoride-specific ion channel. Important for reducing fluoride concentration in the cell, thus reducing its toxicity. This Methanosarcina acetivorans (strain ATCC 35395 / DSM 2834 / JCM 12185 / C2A) protein is Fluoride-specific ion channel FluC 3.